A 291-amino-acid chain; its full sequence is Phosphate import ATP-binding protein PstB (291 aa).

Residues 45–286 enclose the ABC transporter domain; the sequence is YSTQNLDLWY…PADKQTEDYI (242 aa). 77–84 contacts ATP; it reads GPSGCGKS.

This sequence belongs to the ABC transporter superfamily. Phosphate importer (TC 3.A.1.7) family. As to quaternary structure, the complex is composed of two ATP-binding proteins (PstB), two transmembrane proteins (PstC and PstA) and a solute-binding protein (PstS).

The protein resides in the cell membrane. The enzyme catalyses phosphate(out) + ATP + H2O = ADP + 2 phosphate(in) + H(+). Part of the ABC transporter complex PstSACB involved in phosphate import. Responsible for energy coupling to the transport system. This is Phosphate import ATP-binding protein PstB from Staphylococcus epidermidis (strain ATCC 12228 / FDA PCI 1200).